The chain runs to 349 residues: UDP-3-O-acylglucosamine N-acyltransferase 1 (349 aa).

The Proton acceptor role is filled by H241.

The protein belongs to the transferase hexapeptide repeat family. LpxD subfamily. Homotrimer.

The enzyme catalyses a UDP-3-O-[(3R)-3-hydroxyacyl]-alpha-D-glucosamine + a (3R)-hydroxyacyl-[ACP] = a UDP-2-N,3-O-bis[(3R)-3-hydroxyacyl]-alpha-D-glucosamine + holo-[ACP] + H(+). Its pathway is bacterial outer membrane biogenesis; LPS lipid A biosynthesis. Catalyzes the N-acylation of UDP-3-O-acylglucosamine using 3-hydroxyacyl-ACP as the acyl donor. Is involved in the biosynthesis of lipid A, a phosphorylated glycolipid that anchors the lipopolysaccharide to the outer membrane of the cell. The protein is UDP-3-O-acylglucosamine N-acyltransferase 1 of Gloeobacter violaceus (strain ATCC 29082 / PCC 7421).